Here is a 329-residue protein sequence, read N- to C-terminus: COP9 signalosome complex subunit 6 (329 aa).

Residues 44–175 form the MPN domain; that stretch reads TRVKAQAACS…VTIYESELHV (132 aa).

This sequence belongs to the peptidase M67A family. CSN6 subfamily. Component of the CSN complex, probably composed of CSN1, CSN2, CSN3, CSN4, CSN5, CSN6, CSN7 and CSN8.

In terms of biological role, component of the COP9 signalosome complex (CSN), a complex involved in various cellular and developmental processes such as photomorphogenesis and response to hormones. The CSN complex is an essential regulator of the ubiquitin (Ubl) conjugation pathway by mediating the deneddylation of the cullin subunits of SCF-type E3 ligase complexes, leading to decrease the Ubl ligase activity of SCF. Involved in early response to iron deficiency. This chain is COP9 signalosome complex subunit 6, found in Oryza sativa subsp. japonica (Rice).